The primary structure comprises 117 residues: Protein RALF-like 32 (117 aa).

Positions 1–26 (MEIKPSRIFSTITIFFLCLLLAHVTS) are cleaved as a signal peptide. A propeptide spans 27–64 (KASSSSLCNGSVAECSSMVETEEMSVIMESWSSQRLTE) (removed in mature form). Asn-35 is a glycosylation site (N-linked (GlcNAc...) asparagine). A disordered region spans residues 77–107 (RNQPACDGGKRGESYSTQCLPPPSNPYSRGC). Intrachain disulfides connect Cys-82–Cys-95 and Cys-107–Cys-113.

The protein belongs to the plant rapid alkalinization factor (RALF) family. In terms of processing, proteolytically cleaved, probably by S1P, a subtilisin-like serine protease (subtilase).

The protein resides in the secreted. Cell signaling peptide that may regulate plant stress, growth, and development. Mediates a rapid alkalinization of extracellular space by mediating a transient increase in the cytoplasmic Ca(2+) concentration leading to a calcium-dependent signaling events through a cell surface receptor and a concomitant activation of some intracellular mitogen-activated protein kinases. In Arabidopsis thaliana (Mouse-ear cress), this protein is Protein RALF-like 32 (RALFL32).